We begin with the raw amino-acid sequence, 478 residues long: MKTVKKVNFNGQPFHFIGIGGIGMSALAYILAERNLPVSGSDLRPTHITQRLQGAGAHIFHRQEANNLALFHSPGPQNSSQTVPQVICSTAINDHNKEYQAARDLGYPIFHRSDVLAALIADYDSIAVAGTHGKTTTSSLIGYVLLEAGLDPTIIVGGEVDAWEGNARLGQGRFLVAEADESDGSLTKHAPKIGVITNIELDHPDHYQNLSEVIDTFHEFAHQCQILVACLDCDTIAEHFRPTISYSLDPEKGADYTVSEIIYEQGMMKASVWEKGSYLGQMEVKIPGQHNISNALAVVAIGRYLGLEFAVIADAIATFAGAKRRFEHKGEANGITFIDDYAHHPSELLATLAAAKLKVEGKQYQRSIAIFQPHRYSRTTAFLEEFGSAFSSADVVVLTDIYSAGEVNINHVTGQQVAEQVRKHHKNAYYHPELSSLGQFLLEILQPGDLALFLGAGNLNQVIPEMLSLYREQLAVRV.

130–136 (GTHGKTT) contacts ATP.

This sequence belongs to the MurCDEF family.

Its subcellular location is the cytoplasm. The catalysed reaction is UDP-N-acetyl-alpha-D-muramate + L-alanine + ATP = UDP-N-acetyl-alpha-D-muramoyl-L-alanine + ADP + phosphate + H(+). It participates in cell wall biogenesis; peptidoglycan biosynthesis. Its function is as follows. Cell wall formation. The polypeptide is UDP-N-acetylmuramate--L-alanine ligase (Microcystis aeruginosa (strain NIES-843 / IAM M-2473)).